Consider the following 144-residue polypeptide: Superoxide dismutase [Mn], mitochondrial (144 aa).

Positions 10, 58, and 143 each coordinate Mn(2+).

The protein belongs to the iron/manganese superoxide dismutase family. As to quaternary structure, homotetramer. It depends on Mn(2+) as a cofactor.

The protein resides in the mitochondrion matrix. It catalyses the reaction 2 superoxide + 2 H(+) = H2O2 + O2. Destroys superoxide anion radicals which are normally produced within the cells and which are toxic to biological systems. The protein is Superoxide dismutase [Mn], mitochondrial of Palinurus vulgaris (European spiny lobster).